Consider the following 227-residue polypeptide: 2-C-methyl-D-erythritol 4-phosphate cytidylyltransferase (227 aa).

Belongs to the IspD/TarI cytidylyltransferase family. IspD subfamily.

It catalyses the reaction 2-C-methyl-D-erythritol 4-phosphate + CTP + H(+) = 4-CDP-2-C-methyl-D-erythritol + diphosphate. Its pathway is isoprenoid biosynthesis; isopentenyl diphosphate biosynthesis via DXP pathway; isopentenyl diphosphate from 1-deoxy-D-xylulose 5-phosphate: step 2/6. Functionally, catalyzes the formation of 4-diphosphocytidyl-2-C-methyl-D-erythritol from CTP and 2-C-methyl-D-erythritol 4-phosphate (MEP). In Caldanaerobacter subterraneus subsp. tengcongensis (strain DSM 15242 / JCM 11007 / NBRC 100824 / MB4) (Thermoanaerobacter tengcongensis), this protein is 2-C-methyl-D-erythritol 4-phosphate cytidylyltransferase.